Here is a 713-residue protein sequence, read N- to C-terminus: Polyribonucleotide nucleotidyltransferase (713 aa).

Aspartate 498 and aspartate 504 together coordinate Mg(2+). Residues 565 to 631 (PRILSLKVPV…RIEDLTREAK (67 aa)) form the KH domain. In terms of domain architecture, S1 motif spans 633–701 (GEIYEGTVTR…ERGKIDLIRP (69 aa)).

Belongs to the polyribonucleotide nucleotidyltransferase family. Mg(2+) is required as a cofactor.

The protein localises to the cytoplasm. The catalysed reaction is RNA(n+1) + phosphate = RNA(n) + a ribonucleoside 5'-diphosphate. Functionally, involved in mRNA degradation. Catalyzes the phosphorolysis of single-stranded polyribonucleotides processively in the 3'- to 5'-direction. The protein is Polyribonucleotide nucleotidyltransferase of Thermus thermophilus (strain ATCC 27634 / DSM 579 / HB8).